The sequence spans 746 residues: NAD(P)H-quinone oxidoreductase subunit 5, chloroplastic (746 aa).

16 helical membrane-spanning segments follow: residues 9-29 (WIIP…LLLF), 40-60 (WTFL…YLSI), 89-109 (IDPL…LVLI), 125-145 (FAYL…SNLI), 147-167 (VYFF…FWFT), 185-205 (GDFG…SFEF), 221-241 (VNLL…IAKS), 258-278 (TPIS…FLVA), 280-300 (LLPL…IGII), 327-347 (LGYM…FHLI), 354-374 (ALLF…VGYS), 396-416 (TAFL…WFWS), 425-445 (LLFS…TAFY), 547-567 (ILFP…IGIP), 608-628 (FSVS…KPFY), and 722-742 (FYLF…FFFY).

This sequence belongs to the complex I subunit 5 family. As to quaternary structure, NDH is composed of at least 16 different subunits, 5 of which are encoded in the nucleus.

The protein localises to the plastid. Its subcellular location is the chloroplast thylakoid membrane. The enzyme catalyses a plastoquinone + NADH + (n+1) H(+)(in) = a plastoquinol + NAD(+) + n H(+)(out). It catalyses the reaction a plastoquinone + NADPH + (n+1) H(+)(in) = a plastoquinol + NADP(+) + n H(+)(out). Its function is as follows. NDH shuttles electrons from NAD(P)H:plastoquinone, via FMN and iron-sulfur (Fe-S) centers, to quinones in the photosynthetic chain and possibly in a chloroplast respiratory chain. The immediate electron acceptor for the enzyme in this species is believed to be plastoquinone. Couples the redox reaction to proton translocation, and thus conserves the redox energy in a proton gradient. This Draba nemorosa (Woodland whitlowgrass) protein is NAD(P)H-quinone oxidoreductase subunit 5, chloroplastic (ndhF).